A 570-amino-acid polypeptide reads, in one-letter code: Coiled-coil domain-containing protein 22 homolog (570 aa).

Disordered stretches follow at residues 110-129 (RQSE…REQL) and 234-280 (LTST…PLEL). Positions 248–257 (TSPTQTSTTA) are enriched in polar residues. The segment covering 265–276 (SSEATATSTTTT) has biased composition (low complexity). 2 coiled-coil regions span residues 308-471 (ELKI…LQRQ) and 529-570 (GEKL…ITVG).

The protein belongs to the CCDC22 family.

This chain is Coiled-coil domain-containing protein 22 homolog, found in Drosophila willistoni (Fruit fly).